Here is a 668-residue protein sequence, read N- to C-terminus: Break repair meiotic recombinase recruitment factor 1 (668 aa).

Disordered stretches follow at residues 1 to 142, 155 to 333, 349 to 465, 482 to 521, and 642 to 668; these read MTKR…AQSP, LQEA…GCSS, LEER…GGQN, VLEH…HSAD, and LGGK…WREL. The span at 114–125 shows a compositional bias: basic and acidic residues; the sequence is TRKEEMKDEDRG. Residues 166 to 180 show a composition bias toward polar residues; sequence QADSARPEQSSQSPV. The span at 208-251 shows a compositional bias: basic and acidic residues; that stretch reads SQDHLSEQGADDSKPETDRVPGDGGQKEHLPSIDSEGEKPDRGA. Residues 279–296 show a composition bias toward low complexity; sequence TPASAPTSGPAPGLGPAS. The span at 305 to 316 shows a compositional bias: polar residues; it reads AQGSPDPQQTPS. Residue Ser370 is modified to Phosphoserine. The span at 391–400 shows a compositional bias: low complexity; it reads TGETTGESGE.

In terms of assembly, interacts with HSF2BP (via N-terminus) and BRCA2; the interaction with HSF2BP is direct and allows the formation of a ternary complex. The complex BRME1:HSF2BP:BRCA2 interacts with SPATA22, MEIOB and RAD51.

It localises to the chromosome. In terms of biological role, meiotic recombination factor component of recombination bridges involved in meiotic double-strand break repair. Modulates the localization of recombinases DMC1:RAD51 to meiotic double-strand break (DSB) sites through the interaction with and stabilization of the BRCA2:HSF2BP complex during meiotic recombination. Indispensable for the DSB repair, homologous synapsis, and crossover formation that are needed for progression past metaphase I, is essential for spermatogenesis and male fertility. The chain is Break repair meiotic recombinase recruitment factor 1 from Homo sapiens (Human).